We begin with the raw amino-acid sequence, 167 residues long: 2-C-methyl-D-erythritol 2,4-cyclodiphosphate synthase (167 aa).

Residues Asp-10 and His-12 each coordinate a divalent metal cation. Residues 10–12 (DVH) and 36–37 (HS) contribute to the 4-CDP-2-C-methyl-D-erythritol 2-phosphate site. His-44 contacts a divalent metal cation. 4-CDP-2-C-methyl-D-erythritol 2-phosphate is bound by residues 58-60 (NIG), 63-67 (FPNTN), 134-137 (TTSE), Phe-141, and Arg-144.

The protein belongs to the IspF family. As to quaternary structure, homotrimer. A divalent metal cation is required as a cofactor.

It carries out the reaction 4-CDP-2-C-methyl-D-erythritol 2-phosphate = 2-C-methyl-D-erythritol 2,4-cyclic diphosphate + CMP. It participates in isoprenoid biosynthesis; isopentenyl diphosphate biosynthesis via DXP pathway; isopentenyl diphosphate from 1-deoxy-D-xylulose 5-phosphate: step 4/6. In terms of biological role, involved in the biosynthesis of isopentenyl diphosphate (IPP) and dimethylallyl diphosphate (DMAPP), two major building blocks of isoprenoid compounds. Catalyzes the conversion of 4-diphosphocytidyl-2-C-methyl-D-erythritol 2-phosphate (CDP-ME2P) to 2-C-methyl-D-erythritol 2,4-cyclodiphosphate (ME-CPP) with a corresponding release of cytidine 5-monophosphate (CMP). This Azobacteroides pseudotrichonymphae genomovar. CFP2 protein is 2-C-methyl-D-erythritol 2,4-cyclodiphosphate synthase.